The primary structure comprises 552 residues: Glutamine-dependent NAD(+) synthetase (552 aa).

Residues 5 to 245 (FRITLAQLNP…EAVVHVDLER (241 aa)) enclose the CN hydrolase domain. The active-site Proton acceptor; for glutaminase activity is the Glu-45. The For glutaminase activity role is filled by Lys-113. The active-site Nucleophile; for glutaminase activity is the Cys-149. 2 residues coordinate L-glutamine: Ser-175 and Lys-181. The tract at residues 275-552 (LQDYLRKSGF…PMVNRWRDQS (278 aa)) is ligase. 290 to 297 (GLSGGIDS) lines the ATP pocket. Position 373 (Asn-373) interacts with deamido-NAD(+). Thr-397 provides a ligand contact to ATP. Residues Glu-402 and Lys-521 each coordinate deamido-NAD(+).

In the C-terminal section; belongs to the NAD synthetase family.

It carries out the reaction deamido-NAD(+) + L-glutamine + ATP + H2O = L-glutamate + AMP + diphosphate + NAD(+) + H(+). Its pathway is cofactor biosynthesis; NAD(+) biosynthesis; NAD(+) from deamido-NAD(+) (L-Gln route): step 1/1. Its function is as follows. Catalyzes the ATP-dependent amidation of deamido-NAD to form NAD. Uses L-glutamine as a nitrogen source. This Rhodobacter capsulatus (Rhodopseudomonas capsulata) protein is Glutamine-dependent NAD(+) synthetase.